A 203-amino-acid chain; its full sequence is Protein GrpE (203 aa).

Positions 1 to 20 (MSSKEQNVHEEQVSKEKEGM) are enriched in basic and acidic residues. The tract at residues 1–38 (MSSKEQNVHEEQVSKEKEGMESVMNESQEQVKSEDAQA) is disordered.

The protein belongs to the GrpE family. Homodimer.

It is found in the cytoplasm. In terms of biological role, participates actively in the response to hyperosmotic and heat shock by preventing the aggregation of stress-denatured proteins, in association with DnaK and GrpE. It is the nucleotide exchange factor for DnaK and may function as a thermosensor. Unfolded proteins bind initially to DnaJ; upon interaction with the DnaJ-bound protein, DnaK hydrolyzes its bound ATP, resulting in the formation of a stable complex. GrpE releases ADP from DnaK; ATP binding to DnaK triggers the release of the substrate protein, thus completing the reaction cycle. Several rounds of ATP-dependent interactions between DnaJ, DnaK and GrpE are required for fully efficient folding. In Proteus mirabilis (strain HI4320), this protein is Protein GrpE.